A 497-amino-acid chain; its full sequence is Glycerol kinase (497 aa).

Thr-12 lines the ADP pocket. Residues Thr-12, Thr-13, and Ser-14 each contribute to the ATP site. Thr-12 is a sn-glycerol 3-phosphate binding site. Arg-16 provides a ligand contact to ADP. Arg-82, Glu-83, Tyr-134, and Asp-243 together coordinate sn-glycerol 3-phosphate. Glycerol is bound by residues Arg-82, Glu-83, Tyr-134, Asp-243, and Gln-244. Residues Thr-265 and Gly-308 each coordinate ADP. Positions 265, 308, 312, and 409 each coordinate ATP. ADP-binding residues include Gly-409 and Asn-413.

This sequence belongs to the FGGY kinase family.

The enzyme catalyses glycerol + ATP = sn-glycerol 3-phosphate + ADP + H(+). It functions in the pathway polyol metabolism; glycerol degradation via glycerol kinase pathway; sn-glycerol 3-phosphate from glycerol: step 1/1. With respect to regulation, inhibited by fructose 1,6-bisphosphate (FBP). In terms of biological role, key enzyme in the regulation of glycerol uptake and metabolism. Catalyzes the phosphorylation of glycerol to yield sn-glycerol 3-phosphate. This chain is Glycerol kinase, found in Solidesulfovibrio magneticus (strain ATCC 700980 / DSM 13731 / RS-1) (Desulfovibrio magneticus).